Consider the following 1204-residue polypeptide: TPR repeat-containing protein DDB_G0287999 (1204 aa).

Low complexity predominate over residues 32–48 (TTDTTTTTSTSTTTDTD). Residues 32–55 (TTDTTTTTSTSTTTDTDTNSEKSN) are disordered. 3 TPR repeats span residues 263 to 296 (SKGL…YKDL), 379 to 412 (NDSN…DQLY), and 583 to 617 (IQHF…GSVT). The tract at residues 360 to 387 (QPPPQEQQLMDDDSNSNSNNDSNNIIKN) is disordered. Low complexity predominate over residues 374-387 (NSNSNNDSNNIIKN). 2 disordered regions span residues 639-660 (NNNN…NNNN) and 761-797 (DDND…KTTT). Residues 766-778 (DNNNNNNNNNNNN) show a composition bias toward low complexity.

This Dictyostelium discoideum (Social amoeba) protein is TPR repeat-containing protein DDB_G0287999.